A 98-amino-acid polypeptide reads, in one-letter code: NADH-ubiquinone oxidoreductase chain 4L (98 aa).

3 helical membrane-spanning segments follow: residues 1–21 (MSPILINMLLAFTISLIGLLI), 30–50 (LLCLEGMMLSLFILTSTLALT), and 61–81 (IILLVFAACEAAIGLSLLVMV).

The protein belongs to the complex I subunit 4L family. Core subunit of respiratory chain NADH dehydrogenase (Complex I) which is composed of 45 different subunits.

It is found in the mitochondrion inner membrane. The catalysed reaction is a ubiquinone + NADH + 5 H(+)(in) = a ubiquinol + NAD(+) + 4 H(+)(out). Functionally, core subunit of the mitochondrial membrane respiratory chain NADH dehydrogenase (Complex I) which catalyzes electron transfer from NADH through the respiratory chain, using ubiquinone as an electron acceptor. Part of the enzyme membrane arm which is embedded in the lipid bilayer and involved in proton translocation. The protein is NADH-ubiquinone oxidoreductase chain 4L (MT-ND4L) of Chrysochloris asiatica (Cape golden mole).